The chain runs to 515 residues: C-glycoside 3-oxidase (515 aa).

Glutamate 41 is an FAD binding site. Residues 62–82 (ERAHAQRRSEGPHAREDDDRV) show a composition bias toward basic and acidic residues. The segment at 62-90 (ERAHAQRRSEGPHAREDDDRVGGIVKSAQ) is disordered. Residues serine 118, asparagine 120, methionine 124, threonine 129, alanine 131, and valine 237 each coordinate FAD. Histidine 444 (proton acceptor) is an active-site residue. FAD is bound by residues asparagine 478 and threonine 490.

The protein belongs to the GMC oxidoreductase family. As to quaternary structure, monomer. FAD serves as cofactor.

It catalyses the reaction isoorientin + O2 = 3''-dehydroisoorientin + H2O2. It carries out the reaction mangiferin + O2 = 3'-dehydromangiferin + H2O2. Its function is as follows. FAD-dependent C-glycoside-metabolizing enzyme that participates in the degradation of certain C-glycosides by catalyzing the oxidation of the hydroxyl group at the C3 position of the sugar moiety. Shows oxidase activity toward C-glycosides such as isoorientin and mangiferin but cannot use carminic acid, puerarin, orientin or aloesin. Shows weak activity (100 to 1000-fold lower) with O-glycosides. Probably plays a crucial role in the metabolism of C-glycosides in nature. This is C-glycoside 3-oxidase from Microbacterium trichothecenolyticum (Aureobacterium trichothecenolyticum).